The primary structure comprises 366 residues: Proline-rich protein 19 (366 aa).

Disordered regions lie at residues 1 to 53, 102 to 149, 256 to 286, and 301 to 338; these read MDPR…RDPC, ESHT…DLPV, TPAHRGSQVQPPGHQLPFLSSASSPSGAAWG, and ATPPPPPPQPWDVRPPQPLPQPPSPLLPRTSALDWSPN. Over residues 18 to 29 the composition is skewed to basic residues; it reads GRIRRRKTRRER. 2 stretches are compositionally biased toward polar residues: residues 104-113 and 256-265; these read HTPQLPTKPS and TPAHRGSQVQ. The span at 275–286 shows a compositional bias: low complexity; it reads SSASSPSGAAWG. The segment covering 302-326 has biased composition (pro residues); it reads TPPPPPPQPWDVRPPQPLPQPPSPL.

In terms of assembly, interacts with CNTD1. Preferentially expressed in gonads.

Its subcellular location is the nucleus. It is found in the chromosome. Functionally, promotes meiotic crossing over formation through its interaction with CNTD1 by participating in the crossover differentiation step of crossover-specific recombination intermediates. In Mus musculus (Mouse), this protein is Proline-rich protein 19.